Consider the following 97-residue polypeptide: Co-chaperonin GroES (97 aa).

The protein belongs to the GroES chaperonin family. In terms of assembly, heptamer of 7 subunits arranged in a ring. Interacts with the chaperonin GroEL.

It is found in the cytoplasm. Its function is as follows. Together with the chaperonin GroEL, plays an essential role in assisting protein folding. The GroEL-GroES system forms a nano-cage that allows encapsulation of the non-native substrate proteins and provides a physical environment optimized to promote and accelerate protein folding. GroES binds to the apical surface of the GroEL ring, thereby capping the opening of the GroEL channel. The sequence is that of Co-chaperonin GroES from Pseudomonas fluorescens (strain ATCC BAA-477 / NRRL B-23932 / Pf-5).